Here is a 266-residue protein sequence, read N- to C-terminus: Protein-ADP-ribose hydrolase (266 aa).

The 192-residue stretch at 74–265 folds into the Macro domain; sequence TDLKDLKPIK…LYKEALNRDA (192 aa). The ADP-D-ribose site is built by D93, I94, and N107. Positions 113, 118, and 120 each coordinate Zn(2+). The ADP-D-ribose site is built by C120, I121, D122, S212, T213, G214, and F216.

This sequence belongs to the MacroD-type family. Zn-Macro subfamily. As to quaternary structure, monomer. Directly interacts with the lipoylated form of GcvH-L. The cofactor is Zn(2+).

It catalyses the reaction 4-O-(ADP-D-ribosyl)-L-aspartyl-[protein] + H2O = L-aspartyl-[protein] + ADP-D-ribose + H(+). Functionally, ADP-ribosylhydrolase that specifically reverses the SirTM-mediated mono-ADP-ribosylation at an asparatate residue of GcvH-L (SAV0324), by releasing ADP-ribose from the target protein. May play a role in the regulation of the response to host-induced oxidative stress. In Staphylococcus aureus (strain Mu50 / ATCC 700699), this protein is Protein-ADP-ribose hydrolase.